The following is a 262-amino-acid chain: Acyl-[acyl-carrier-protein]--UDP-N-acetylglucosamine O-acyltransferase (262 aa).

Belongs to the transferase hexapeptide repeat family. LpxA subfamily. Homotrimer.

The protein localises to the cytoplasm. It carries out the reaction a (3R)-hydroxyacyl-[ACP] + UDP-N-acetyl-alpha-D-glucosamine = a UDP-3-O-[(3R)-3-hydroxyacyl]-N-acetyl-alpha-D-glucosamine + holo-[ACP]. Its pathway is glycolipid biosynthesis; lipid IV(A) biosynthesis; lipid IV(A) from (3R)-3-hydroxytetradecanoyl-[acyl-carrier-protein] and UDP-N-acetyl-alpha-D-glucosamine: step 1/6. In terms of biological role, involved in the biosynthesis of lipid A, a phosphorylated glycolipid that anchors the lipopolysaccharide to the outer membrane of the cell. The chain is Acyl-[acyl-carrier-protein]--UDP-N-acetylglucosamine O-acyltransferase from Campylobacter curvus (strain 525.92).